The chain runs to 221 residues: Chalcone--flavanone isomerase 2 (221 aa).

Substrate contacts are provided by Thr50, Asn115, and Ser192.

It belongs to the chalcone isomerase family.

The catalysed reaction is a chalcone = a flavanone.. It participates in secondary metabolite biosynthesis; flavonoid biosynthesis. Catalyzes the intramolecular cyclization of bicyclic chalcones into tricyclic (S)-flavanones. Responsible for the isomerization of 4,2',4',6'-tetrahydroxychalcone (also termed chalcone) into naringenin. This Lotus japonicus (Lotus corniculatus var. japonicus) protein is Chalcone--flavanone isomerase 2 (CHI2).